The following is a 296-amino-acid chain: 4-hydroxy-tetrahydrodipicolinate synthase (296 aa).

Position 50 (Thr-50) interacts with pyruvate. Tyr-138 functions as the Proton donor/acceptor in the catalytic mechanism. Residue Lys-166 is the Schiff-base intermediate with substrate of the active site. Pyruvate is bound at residue Ile-208.

This sequence belongs to the DapA family. Homotetramer; dimer of dimers.

It localises to the cytoplasm. The catalysed reaction is L-aspartate 4-semialdehyde + pyruvate = (2S,4S)-4-hydroxy-2,3,4,5-tetrahydrodipicolinate + H2O + H(+). It participates in amino-acid biosynthesis; L-lysine biosynthesis via DAP pathway; (S)-tetrahydrodipicolinate from L-aspartate: step 3/4. Catalyzes the condensation of (S)-aspartate-beta-semialdehyde [(S)-ASA] and pyruvate to 4-hydroxy-tetrahydrodipicolinate (HTPA). This chain is 4-hydroxy-tetrahydrodipicolinate synthase, found in Thiobacillus denitrificans (strain ATCC 25259 / T1).